The primary structure comprises 386 residues: MADNSFSDGVPSDSLEAAKNASNTEKLTDQVMQNPQVLAALQERLDNVSHTPSSYIETLPKAVKRRINALKQLQVKCAHIEAKFYEEVHDLERKYAALYQPLFDKRREFITGDVEPTDAESEWHSETEEEDKLAGDMKNKAVIAEKEAAAAEEPAPRGIPEFWFTIFRNVDMLSELVQEYDEPILKHLQDIKVKFSDPGQPMSFVLEFHFEPDDYFTNPVLTKTYKMKSEPDKADPFSFEGPEIVDCDGCTIDWKKGKNVTVKTIKKKQKHKGRGTVRTITKQVPNDSFFNFFSPLRASGDGESLDEDSEFTLASDFEIGHFFRERIVPRAVLYFTGEAIEDDDNFEEGEEGEEEELEGDEEAEDDDDAEINPKKEPSQPSECKQQ.

The disordered stretch occupies residues 1–29; that stretch reads MADNSFSDGVPSDSLEAAKNASNTEKLTD. The residue at position 2 (A2) is an N-acetylalanine. 3 positions are modified to phosphoserine: S5, S7, and S12. The span at 20 to 29 shows a compositional bias: polar residues; that stretch reads NASNTEKLTD. Phosphoserine is present on S49. Phosphothreonine is present on T51. 2 positions are modified to phosphoserine: S53 and S54. T58 carries the post-translational modification Phosphothreonine. K105 carries the post-translational modification N6-acetyllysine. A Phosphoserine modification is found at S125. Position 146 is an N6-acetyllysine (K146). A Nuclear localization signal motif is present at residues 265–271; it reads IKKKQKH. S304 is subject to Phosphoserine. The segment covering 339–370 has biased composition (acidic residues); it reads AIEDDDNFEEGEEGEEEELEGDEEAEDDDDAE. The interval 339 to 386 is disordered; the sequence is AIEDDDNFEEGEEGEEEELEGDEEAEDDDDAEINPKKEPSQPSECKQQ.

The protein belongs to the nucleosome assembly protein (NAP) family. As to quaternary structure, interacts with core (H2A, H2B, H3, H4) and linker (H1) histones. Post-translationally, polyglutamylated and polyglycylated. These 2 modifications occur exclusively on glutamate residues and result in either polyglutamate or polyglycine chains on the gamma-carboxyl group. Both modifications can coexist on the same protein on adjacent residues, and lowering polyglycylation levels increases polyglutamylation, and reciprocally. Polyglutamylated by TTLL4. In terms of processing, phosphorylated at the G0/G1 boundary but it is not phosphorylated in S-phase. Phosphorylated protein remains in the cytoplasm in a complex with histones during the G0/G1 transition, whereas dephosphorylation triggers its transport into the nucleus at the G1/S-boundary.

The protein localises to the nucleus. It localises to the cytoplasm. Its function is as follows. Acts as a histone chaperone in nucleosome assembly. In Bos taurus (Bovine), this protein is Nucleosome assembly protein 1-like 4 (NAP1L4).